The primary structure comprises 138 residues: MSSTDDKPRKVQKTEAEWRAQLDPMQFEVTRHGATERAFTGKYADHWQEGVYHCVGCNAPLFDSGTKFDAGCGWPSYFQPLRGEIIDRVVDRSHGMVRVEVRCQDCGAHLGHVFPDGPEPTGERYCINSASLGFEPRK.

One can recognise a MsrB domain in the interval 15-137; it reads EAEWRAQLDP…NSASLGFEPR (123 aa). Residues cysteine 54, cysteine 57, cysteine 103, and cysteine 106 each coordinate Zn(2+). The Nucleophile role is filled by cysteine 126.

The protein belongs to the MsrB Met sulfoxide reductase family. It depends on Zn(2+) as a cofactor.

The enzyme catalyses L-methionyl-[protein] + [thioredoxin]-disulfide + H2O = L-methionyl-(R)-S-oxide-[protein] + [thioredoxin]-dithiol. The protein is Peptide methionine sulfoxide reductase MsrB of Methylibium petroleiphilum (strain ATCC BAA-1232 / LMG 22953 / PM1).